We begin with the raw amino-acid sequence, 887 residues long: PAN2-PAN3 deadenylation complex subunit Pan3 (887 aa).

Residues 49-77 (GVKLKYCRYYAKDKTCFYGEECQFLHEDP) form a C3H1-type zinc finger. Disordered stretches follow at residues 111–139 (GGGA…GLDG), 280–307 (ENNL…SNVS), and 321–393 (PSMG…GQVI). Positions 147 to 498 (MDGGALTDAS…PPPNRIQKSS (352 aa)) are necessary and sufficient for interaction with PABPC1 but not needed for interaction with PAN2. Composition is skewed to polar residues over residues 281-290 (NNLQTPNPTA) and 298-307 (GSTSRLSNVS). The PABPC-interacting motif-2 (PAM-2) motif lies at 284–299 (QTPNPTASEFIPKGGS). A phosphoserine mark is found at S354 and S361. The interval 463 to 750 (QIDQADMPAV…SVNDIMPMIG (288 aa)) is pseudokinase domain. ATP contacts are provided by residues R521, 570 to 577 (DFHAGGET), and 644 to 645 (TK). Residues 789–887 (TINERPEFQK…ELIAAANGQL (99 aa)) are knob domain.

Belongs to the protein kinase superfamily. PAN3 family. Homodimer. Forms a heterotrimer with a catalytic subunit PAN2 to form the poly(A)-nuclease (PAN) deadenylation complex. Interacts (via PAM-2 motif) with poly(A)-binding protein PABPC1 (via PABC domain), conferring substrate specificity of the enzyme complex. Interacts with the GW182 family proteins TNRC6A, TNRC6B and TNRC6C. Interacts with YTHDF3. In terms of assembly, interacts with PAN2. Interacts (via N-terminus) with PABPC1 at lower efficiency than isoform 3. As to quaternary structure, interacts with PAN2. Interacts (via N-terminus) with PABPC1 at higher efficiency than isoform 1.

The protein resides in the cytoplasm. Its subcellular location is the P-body. The protein localises to the nucleus. In terms of biological role, regulatory subunit of the poly(A)-nuclease (PAN) deadenylation complex, one of two cytoplasmic mRNA deadenylases involved in general and miRNA-mediated mRNA turnover. PAN specifically shortens poly(A) tails of RNA and the activity is stimulated by poly(A)-binding protein (PABP). PAN deadenylation is followed by rapid degradation of the shortened mRNA tails by the CCR4-NOT complex. Deadenylated mRNAs are then degraded by two alternative mechanisms, namely exosome-mediated 3'-5' exonucleolytic degradation, or deadenylation-dependent mRNA decapping and subsequent 5'-3' exonucleolytic degradation by XRN1. PAN3 acts as a regulator for PAN activity, recruiting the catalytic subunit PAN2 to mRNA via its interaction with RNA and PABP, and to miRNA targets via its interaction with GW182 family proteins. Its function is as follows. Decreases PAN2-mediated deadenylation, possibly by preventing progression into the second CCR4-NOT mediated stage of biphasic deadenylation. Has a significant effect on mRNA stability, generally stabilizing a subset of the transcriptome. Stabilizes mRNAs degraded by the AU-rich element (ARE)-mediated mRNA decay pathway but promotes degradation of mRNAs by the microRNA-mediated pathway. Its activity influences mRNP remodeling, specifically reducing formation of a subset of P-bodies containing GW220, an isoform of TNRC6A. Enhances PAN2 deadenylase activity and has an extensive effect on mRNA stability, generally enhancing mRNA decay across the transcriptome by multiple pathways, including the AU-rich element (ARE)-mediated pathway, microRNA-mediated pathway and the nonsense-mediated pathway (NMD). Its activity is required for efficient P-body formation. May be involved in regulating mRNAs of genes involved in cell cycle progression and cell proliferation. This Mus musculus (Mouse) protein is PAN2-PAN3 deadenylation complex subunit Pan3.